The primary structure comprises 133 residues: Inhibitor of g-type lysozyme (133 aa).

Positions 1–22 (MKIKSIRKAVLLLALLTSTSFA) are cleaved as a signal peptide.

The protein resides in the periplasm. In terms of biological role, inhibits activity of g-type lysozyme, which confers increased lysozyme tolerance to the bacterium. The protein is Inhibitor of g-type lysozyme (pliG) of Escherichia coli (strain K12).